The primary structure comprises 216 residues: Large ribosomal subunit protein uL1 (216 aa).

Belongs to the universal ribosomal protein uL1 family. As to quaternary structure, component of the large ribosomal subunit.

It is found in the cytoplasm. In terms of biological role, component of the large ribosomal subunit. The ribosome is a large ribonucleoprotein complex responsible for the synthesis of proteins in the cell. This Danio rerio (Zebrafish) protein is Large ribosomal subunit protein uL1 (rpl10a).